The primary structure comprises 602 residues: T-box transcription factor TBX15 (602 aa).

The tract at residues S43 to L95 is disordered. Positions E71–D94 are enriched in polar residues. A DNA-binding region (T-box) is located at residues L122 to D304. The residue at position 330 (T330) is a Phosphothreonine. 2 disordered regions span residues Q338–S369 and Q425–P444. Positions G346–S369 are enriched in low complexity.

As to quaternary structure, can form a heterodimer with TBX18.

The protein localises to the nucleus. Its function is as follows. Probable transcriptional regulator involved in the development of the skeleton of the limb, vertebral column and head. Acts by controlling the number of mesenchymal precursor cells and chondrocytes. The sequence is that of T-box transcription factor TBX15 (Tbx15) from Mus musculus (Mouse).